The chain runs to 160 residues: Probable nucleoside diphosphate kinase DDB_G0292928 (160 aa).

Residues Lys-12, Phe-61, Arg-103, Thr-109, Arg-122, and Asn-132 each coordinate ATP. His-135 (pros-phosphohistidine intermediate) is an active-site residue.

It belongs to the NDK family. Mg(2+) serves as cofactor.

The enzyme catalyses a 2'-deoxyribonucleoside 5'-diphosphate + ATP = a 2'-deoxyribonucleoside 5'-triphosphate + ADP. It catalyses the reaction a ribonucleoside 5'-diphosphate + ATP = a ribonucleoside 5'-triphosphate + ADP. The protein is Probable nucleoside diphosphate kinase DDB_G0292928 of Dictyostelium discoideum (Social amoeba).